A 1253-amino-acid polypeptide reads, in one-letter code: Structural polyprotein (1253 aa).

Residues 37–71 are host transcription inhibition; sequence FQAQQMQQLISAVNALTMRQNAIAPARPPKPKKKK. The interval 58–109 is disordered; that stretch reads AIAPARPPKPKKKKTTKPKPKTQPKKINGKTQQQKKKDKQADKKKKKPGKRE. Positions 64–105 match the Nuclear localization signal motif; sequence PPKPKKKKTTKPKPKTQPKKINGKTQQQKKKDKQADKKKKKP. Residues 65-107 are compositionally biased toward basic residues; the sequence is PKPKKKKTTKPKPKTQPKKINGKTQQQKKKDKQADKKKKKPGK. Positions 87-120 are binding to the viral RNA; the sequence is KTQQQKKKDKQADKKKKKPGKRERMCMKIENDCI. The segment at 105–119 is ribosome-binding; that stretch reads PGKRERMCMKIENDC. C119 and C134 form a disulfide bridge. In terms of domain architecture, Peptidase S3 spans 119-267; the sequence is CIFEVKHEGK…RVTPEGSEEW (149 aa). The active-site Charge relay system is the H145. Positions 150–160 match the Nuclear export signal motif; that stretch reads IDNADLAKLAF. An interaction with spike glycoprotein E2 region spans residues 161–166; the sequence is KKSSKY. D167 (charge relay system) is an active-site residue. Residues 189–199 form a dimerization of the capsid protein region; that stretch reads PEGHYNWHHGA. S219 acts as the Charge relay system in catalysis. Positions 225–229 are dimerization of the capsid protein; that stretch reads DNKGR. The Extracellular segment spans residues 268–701; that stretch reads SAPLITAMCV…YGLYPAATVS (434 aa). 3 disulfide bridges follow: C276–C285, C290–C294, and C293–C325. An N-linked (GlcNAc...) asparagine; by host glycan is attached at N280. N327 is a glycosylation site (N-linked (GlcNAc...) asparagine; by host). Cystine bridges form between C352–C458, C355–C361, C424–C438, C486–C598, C534–C558, and C536–C553. N533 carries N-linked (GlcNAc...) asparagine; by host glycosylation. N595 carries N-linked (GlcNAc...) asparagine; by host glycosylation. A helical transmembrane segment spans residues 702-722; the sequence is AVVGMSLLALISIFASCYMLV. C718 carries the S-stearoyl cysteine; by host lipid modification. Residues 723-727 form an interaction with the capsid protein region; the sequence is AARSK. The Cytoplasmic segment spans residues 723-755; the sequence is AARSKCLTPYALTPGAAVPWTLGILCCAPRAHA. Residue C728 is the site of S-stearoyl cysteine; by host attachment. The tract at residues 728-748 is transient transmembrane before p62-6K protein processing; sequence CLTPYALTPGAAVPWTLGILC. An intrachain disulfide couples C728 to C749. 2 S-palmitoyl cysteine; by host lipidation sites follow: C748 and C749. Over 756–770 the chain is Extracellular; that stretch reads ASVAETMAYLWDQNQ. Residues 771–791 traverse the membrane as a helical segment; sequence ALFWLEFAAPVACILIITYCL. R792 is a topological domain (cytoplasmic). Residues 793 to 813 traverse the membrane as a helical segment; it reads NVLCCCKSLSFLVLLSLGATA. At 814–1230 the chain is on the extracellular side; the sequence is RAYEHSTVMP…ALSWVQKISG (417 aa). 4 disulfides stabilise this stretch: C864–C929, C877–C909, C878–C911, and C883–C893. The E1 fusion peptide loop stretch occupies residues 899–916; sequence VYPFMWGGAYCFCDSENT. N-linked (GlcNAc...) asparagine; by host glycans are attached at residues N956 and N1085. 4 disulfides stabilise this stretch: C1074/C1086, C1116/C1191, C1121/C1195, and C1143/C1185. Positions 1112 to 1192 are E1-DIII; interaction with host receptor VLDLR; the sequence is IDLTCTVATC…SLCSARATCS (81 aa). The chain crosses the membrane as a helical span at residues 1231 to 1251; that stretch reads GLGAFAIGAILVLVVVTCIGL. C1248 carries S-stearoyl cysteine; by host lipidation. The Cytoplasmic segment spans residues 1252 to 1253; that stretch reads RR.

As to quaternary structure, homodimer. Homomultimer. Interacts with host karyopherin KPNA4; this interaction allows the nuclear import of the viral capsid protein. Interacts with spike glycoprotein E2. Interacts with host IRAK1; the interaction leads to inhibition of IRAK1-dependent signaling. The precursor of protein E3/E2 and E1 form a heterodimer shortly after synthesis. In terms of assembly, the precursor of protein E3/E2 and E1 form a heterodimer shortly after synthesis. Processing of the precursor of protein E3/E2 into E2 and E3 results in a heterodimer of the spike glycoproteins E2 and E1. Spike at virion surface are constituted of a trimer of E2-E1 heterodimers. E2-E1 heterodimers interact with host VLDLR or LRP8/APOER2 to mediate viral entry. After target cell attachment and endocytosis, E1 change conformation to form homotrimers. Interacts with 6K protein. Interacts (via E1-DIII) with host VLDLR (via class A repeats); this interaction mediates viral entry into host cell. As to quaternary structure, interacts with spike glycoprotein E1. Processing of the precursor of protein E3/E2 into E2 and E3 results in a heterodimer of the spike glycoproteins E2 and E1. Spike at virion surface are constituted of a trimer of E2-E1 heterodimers. E2-E1 heterodimers interact with host VLDLR or LRP8/APOER2 to mediate viral entry. Interacts with 6K protein. Oligomer. Interacts with spike glycoprotein E1. Interacts with spike glycoprotein E2. In terms of processing, specific enzymatic cleavages in vivo yield mature proteins. Capsid protein is auto-cleaved during polyprotein translation, unmasking a signal peptide at the N-terminus of the precursor of E3/E2. The remaining polyprotein is then targeted to the host endoplasmic reticulum, where host signal peptidase cleaves it into pE2, 6K and E1 proteins. pE2 is further processed to mature E3 and E2 by host furin in trans-Golgi vesicle. Protein processing process takes about 30 minutes at physiologic temperatures. The folding of the p62/6K/E1 precursor requires the formation of intrachain disulfide bonds and has been shown to involve a transient covalent interaction between the nascent and newly synthesized heterodimer and the host-cell chaperones, P4HB/PDI and PDIA3/ERp57. The folding pathway also includes non covalent interaction with human CANX/calnexin and CALR/calreticulin. Post-translationally, palmitoylated via thioester bonds. These palmitoylations may induce disruption of the C-terminus transmembrane. This would result in the reorientation of E2 C-terminus from lumenal to cytoplasmic side. Envelope E1, E2 and E3 proteins are N-glycosylated. In terms of processing, stearoylated. Post-translationally, palmitoylated via thioester bonds with about four covalently bound fatty acids per molecule.

It localises to the virion. It is found in the host cytoplasm. Its subcellular location is the host cell membrane. The protein localises to the host nucleus. The protein resides in the virion membrane. It localises to the host Golgi apparatus. It is found in the host trans-Golgi network. Its subcellular location is the host endoplasmic reticulum. The catalysed reaction is Autocatalytic release of the core protein from the N-terminus of the togavirus structural polyprotein by hydrolysis of a -Trp-|-Ser- bond.. In terms of biological role, forms an icosahedral capsid with a T=4 symmetry composed of 240 copies of the capsid protein surrounded by a lipid membrane through which penetrate 80 spikes composed of trimers of E1-E2 heterodimers. The capsid protein binds to the viral RNA genome at a site adjacent to a ribosome binding site for viral genome translation following genome release. Possesses a protease activity that results in its autocatalytic cleavage from the nascent structural protein. Following its self-cleavage, the capsid protein transiently associates with ribosomes, and within several minutes the protein binds to viral RNA and rapidly assembles into icosahedric core particles. The resulting nucleocapsid eventually associates with the cytoplasmic domain of the spike glycoprotein E2 at the cell membrane, leading to budding and formation of mature virions. In case of infection, new virions attach to target cells and after clathrin-mediated endocytosis their membrane fuses with the host endosomal membrane. This leads to the release of the nucleocapsid into the cytoplasm, followed by an uncoating event necessary for the genomic RNA to become accessible. The uncoating might be triggered by the interaction of capsid proteins with ribosomes. Binding of ribosomes would release the genomic RNA since the same region is genomic RNA-binding and ribosome-binding. Specifically inhibits interleukin-1 receptor-associated kinase 1/IRAK1-dependent signaling during viral entry, representing a means by which the alphaviruses may evade innate immune detection and activation prior to viral gene expression. Its function is as follows. Provides the signal sequence for the translocation of the precursor of protein E3/E2 to the host endoplasmic reticulum. Furin-cleaved E3 remains associated with spike glycoprotein E1 and mediates pH protection of the latter during the transport via the secretory pathway. After virion release from the host cell, the assembly protein E3 is gradually released in the extracellular space. Functionally, plays a role in viral attachment to target host cell, by binding to the cell receptors VLDLR or LRP8/APOER2. The host LDLR can act as a cell receptor for viral entry. Synthesized as a p62 precursor which is processed by furin at the cell membrane just before virion budding, giving rise to E2-E1 heterodimer. The p62-E1 heterodimer is stable, whereas E2-E1 is unstable and dissociate at low pH. p62 is processed at the last step, presumably to avoid E1 fusion activation before its final export to cell surface. E2 C-terminus contains a transitory transmembrane that would be disrupted by palmitoylation, resulting in reorientation of the C-terminal tail from lumenal to cytoplasmic side. This step is critical since E2 C-terminus is involved in budding by interacting with capsid proteins. This release of E2 C-terminus in cytoplasm occurs lately in protein export, and precludes premature assembly of particles at the endoplasmic reticulum membrane. Acts as a viroporin that participates in virus glycoprotein processing and transport to the plasma membrane, cell permeabilization and budding of viral particles. Disrupts the calcium homeostasis of the cell, probably at the endoplasmic reticulum level. This leads to cytoplasmic calcium elevation. Because of its lipophilic properties, the 6K protein is postulated to influence the selection of lipids that interact with the transmembrane domains of the glycoproteins, which, in turn, affects the deformability of the bilayer required for the extreme curvature that occurs as budding proceeds. Present in low amount in virions, about 3% compared to viral glycoproteins. In terms of biological role, class II viral fusion protein. Fusion activity is inactive as long as E1 is bound to E2 in mature virion. After virus attachment to target cell via host VLDLR or LRP8/APOER2 and endocytosis, acidification of the endosome induces dissociation of E1/E2 heterodimer and concomitant trimerization of the E1 subunits. This E1 trimer is fusion active, and promotes release of viral nucleocapsid in cytoplasm after endosome and viral membrane fusion. Efficient fusion requires the presence of cholesterol and sphingolipid in the target membrane. Fusion is optimal at levels of about 1 molecule of cholesterol per 2 molecules of phospholipids, and is specific for sterols containing a 3-beta-hydroxyl group. This Aedes (Middle-African hedgehog) protein is Structural polyprotein.